We begin with the raw amino-acid sequence, 465 residues long: MKPEELKGKVASVIGAGKSGVSAAGLLARAGARPFLSEFGAVSPEAAATLRQLGVPFEEGGHSERVFEAALCIVSPGIPQTVPVIREMHARGIPVVSEIELASWFCPARIIGITGTDGKTTTATLLHRICAAEGERKGFRAFSVGNIGIPFSSEVPGMTAADIAVLELSSYQLEACFDFRPNIAVLTNVTPDHMDRYGGSIEAYATAKYRIHARQGAGDTLIYNHDDPILRAHFDRSEPWPFRLVRLGLRAETLDVAPGDFVSVEDGEIVVRASGSTERLMRVDEIMKPGFRGEHNLYNALSSVAAALAAGVAPETMRGVLAGFGGVEHRQELAGNACGLNWINDSKATSVNALRQALQSVPAGMVLIAGGRDKGNDYSAIADLVREKVACIVAIGESRRKIADAFRGVTPVVEAASLAEAVELARQNARPGASVLFSPACSSFDMFRDFEDRGRQFKQLVRELT.

An ATP-binding site is contributed by 115-121; that stretch reads GTDGKTT.

Belongs to the MurCDEF family.

It is found in the cytoplasm. It catalyses the reaction UDP-N-acetyl-alpha-D-muramoyl-L-alanine + D-glutamate + ATP = UDP-N-acetyl-alpha-D-muramoyl-L-alanyl-D-glutamate + ADP + phosphate + H(+). It functions in the pathway cell wall biogenesis; peptidoglycan biosynthesis. Its function is as follows. Cell wall formation. Catalyzes the addition of glutamate to the nucleotide precursor UDP-N-acetylmuramoyl-L-alanine (UMA). The polypeptide is UDP-N-acetylmuramoylalanine--D-glutamate ligase (Chlorobaculum tepidum (strain ATCC 49652 / DSM 12025 / NBRC 103806 / TLS) (Chlorobium tepidum)).